Consider the following 189-residue polypeptide: MLDDITTQLKSRRALFELIARDMPPLMADMAAQLVEAFRKGNKLLVMGNGGSAADAQHLAAEIVGRFKMERRALPAISLSTDSSILTALGNDYGFDAVFRRQVEALAQAGDVVLGISTSGNSPNVRSALQLARERGCRTMGLLGRDGGSIRSLCDLALVVPSLDTPTIQEGHITIIHIVCDLVEKALFA.

The SIS domain maps to 34–189 (LVEAFRKGNK…CDLVEKALFA (156 aa)). 49 to 51 (NGG) is a substrate binding site. Zn(2+) contacts are provided by H58 and E62. Substrate is bound by residues E62, 91-92 (ND), 117-119 (STS), S122, and Q169. Residues Q169 and H177 each coordinate Zn(2+).

It belongs to the SIS family. GmhA subfamily. In terms of assembly, homotetramer. Zn(2+) serves as cofactor.

The protein localises to the cytoplasm. It carries out the reaction 2 D-sedoheptulose 7-phosphate = D-glycero-alpha-D-manno-heptose 7-phosphate + D-glycero-beta-D-manno-heptose 7-phosphate. The protein operates within carbohydrate biosynthesis; D-glycero-D-manno-heptose 7-phosphate biosynthesis; D-glycero-alpha-D-manno-heptose 7-phosphate and D-glycero-beta-D-manno-heptose 7-phosphate from sedoheptulose 7-phosphate: step 1/1. In terms of biological role, catalyzes the isomerization of sedoheptulose 7-phosphate in D-glycero-D-manno-heptose 7-phosphate. This Pelobacter propionicus (strain DSM 2379 / NBRC 103807 / OttBd1) protein is Phosphoheptose isomerase.